We begin with the raw amino-acid sequence, 379 residues long: MKYVLIQATDNGILRRAECGGAVTALFKYLLDKKLVDGVLALKRGEDVYDGIPTFITNSNELVETAGSLHCAPTNFGKLIAKYLADKKIAVPAKPCDAMAIRELAKLNQINLDNVYMIGLNCGGTISPITAMKMIELFYEVNPLDVVKEEIDKGKFIIELKNGEHKAVKIEELEEKGFGRRKNCQRCEIMIPRMADLACGNWGAEKGWTFVEICSERGRKLVEDAEKDGYIKIKQPSEKAIQVREKIESIMIKLAKKFQKKHLEEEYPSLEKWKKYWNRCIKCYGCRDNCPLCFCVECSLEKDYIEEKGKIPPNPLIFQGIRLSHISQSCINCGQCEDACPMDIPLAYIFHRMQLKIRDTLGYIPGVDNSLPPLFNIER.

4Fe-4S ferredoxin-type domains are found at residues glutamate 271–glutamate 301 and isoleucine 321–histidine 351. [4Fe-4S] cluster contacts are provided by cysteine 280, cysteine 283, cysteine 286, cysteine 290, cysteine 330, cysteine 333, cysteine 336, and cysteine 340.

This sequence belongs to the FrhB family. In terms of assembly, dimer of an alpha (FdhA) and a beta (FdhB) subunit. [4Fe-4S] cluster is required as a cofactor. It depends on FAD as a cofactor. Requires Zn(2+) as cofactor.

It carries out the reaction oxidized coenzyme F420-(gamma-L-Glu)(n) + formate + 2 H(+) = reduced coenzyme F420-(gamma-L-Glu)(n) + CO2. In terms of biological role, catalyzes the oxidation of formate to carbon dioxide, with coenzyme F420 as the electron acceptor. This is F420-dependent formate dehydrogenase subunit beta (fdhB) from Methanocaldococcus jannaschii (strain ATCC 43067 / DSM 2661 / JAL-1 / JCM 10045 / NBRC 100440) (Methanococcus jannaschii).